A 258-amino-acid chain; its full sequence is UPF0246 protein NTHI1156 (258 aa).

The protein belongs to the UPF0246 family.

The polypeptide is UPF0246 protein NTHI1156 (Haemophilus influenzae (strain 86-028NP)).